We begin with the raw amino-acid sequence, 346 residues long: C5a anaphylatoxin chemotactic receptor 1 (346 aa).

Topologically, residues 1-33 (MDDNNSDWTSYDFGNDTIPSPNEISLSHIGTRH) are extracellular. Asparagine 4 and asparagine 15 each carry an N-linked (GlcNAc...) asparagine glycan. A helical transmembrane segment spans residues 34–60 (WITLVCYGIVFLLGVPGNALVVWVTGF). At 61–65 (RMPNS) the chain is on the cytoplasmic side. The chain crosses the membrane as a helical span at residues 66 to 89 (VNAQWFLNLAIADLLCCLSLPILM). Residues 90 to 106 (VPLAQDQHWPFGALACK) are Extracellular-facing. Cysteine 105 and cysteine 183 are oxidised to a cystine. Residues 107–128 (LFSGIFYMMMYCSVLLLVVISL) form a helical membrane-spanning segment. Residues 129 to 149 (DRFLLVTKPVWCQNNRQPRQA) lie on the Cytoplasmic side of the membrane. Residues 150–170 (RILCFIIWILGLLGSSPYFAH) traverse the membrane as a helical segment. The Extracellular portion of the chain corresponds to 171–194 (MEIQHHSETKTVCTGSYSSLGHAW). A helical membrane pass occupies residues 195 to 220 (AITIIRSFLFFLLPFLIICISHWKVY). Residues 221–238 (HMTSSGRRQRDKSSRTLR) lie on the Cytoplasmic side of the membrane. The helical transmembrane segment at 239 to 261 (VILALVLGFFLCWTPLHIVDLLI) threads the bilayer. Over 262–279 (LVSDQPSERFEVNLNLAH) the chain is Extracellular. A helical membrane pass occupies residues 280-300 (VLTLCLAYINSCLNPLLYVCL). Residues 301-346 (GRGFKENLISSLRSVLHFASEAPTHGPSMTTNSKSTTDGVFREKPV) lie on the Cytoplasmic side of the membrane. A disordered region spans residues 323-346 (PTHGPSMTTNSKSTTDGVFREKPV). Over residues 327–338 (PSMTTNSKSTTD) the composition is skewed to polar residues.

Belongs to the G-protein coupled receptor 1 family.

It is found in the cell membrane. Its function is as follows. Receptor for the chemotactic and inflammatory peptide anaphylatoxin C5a. This receptor stimulates chemotaxis, granule enzyme release and superoxide anion production. This chain is C5a anaphylatoxin chemotactic receptor 1 (c5ar1), found in Danio rerio (Zebrafish).